The chain runs to 373 residues: Lipoyl synthase (373 aa).

The tract at residues 14–36 is disordered; that stretch reads VSNDHPSSSPLQPGVKQSGEDKI. Residues Cys-81, Cys-86, Cys-92, Cys-107, Cys-111, Cys-114, and Ser-323 each contribute to the [4Fe-4S] cluster site. One can recognise a Radical SAM core domain in the interval 93-312; the sequence is FSHGTATFMI…EEYGMALGFS (220 aa). The segment at 346–373 is disordered; it reads PAVSSTEHRERNTIASKSASKTESIHHR. Residues 358-367 are compositionally biased toward polar residues; that stretch reads TIASKSASKT.

It belongs to the radical SAM superfamily. Lipoyl synthase family. [4Fe-4S] cluster serves as cofactor.

It localises to the cytoplasm. The catalysed reaction is [[Fe-S] cluster scaffold protein carrying a second [4Fe-4S](2+) cluster] + N(6)-octanoyl-L-lysyl-[protein] + 2 oxidized [2Fe-2S]-[ferredoxin] + 2 S-adenosyl-L-methionine + 4 H(+) = [[Fe-S] cluster scaffold protein] + N(6)-[(R)-dihydrolipoyl]-L-lysyl-[protein] + 4 Fe(3+) + 2 hydrogen sulfide + 2 5'-deoxyadenosine + 2 L-methionine + 2 reduced [2Fe-2S]-[ferredoxin]. Its pathway is protein modification; protein lipoylation via endogenous pathway; protein N(6)-(lipoyl)lysine from octanoyl-[acyl-carrier-protein]: step 2/2. Catalyzes the radical-mediated insertion of two sulfur atoms into the C-6 and C-8 positions of the octanoyl moiety bound to the lipoyl domains of lipoate-dependent enzymes, thereby converting the octanoylated domains into lipoylated derivatives. This Xylella fastidiosa (strain M23) protein is Lipoyl synthase.